A 457-amino-acid chain; its full sequence is Argininosuccinate lyase (457 aa).

Belongs to the lyase 1 family. Argininosuccinate lyase subfamily.

It is found in the cytoplasm. It carries out the reaction 2-(N(omega)-L-arginino)succinate = fumarate + L-arginine. Its pathway is amino-acid biosynthesis; L-arginine biosynthesis; L-arginine from L-ornithine and carbamoyl phosphate: step 3/3. In Haemophilus influenzae (strain 86-028NP), this protein is Argininosuccinate lyase.